The following is a 137-amino-acid chain: Large ribosomal subunit protein bL17 (137 aa).

Belongs to the bacterial ribosomal protein bL17 family. In terms of assembly, part of the 50S ribosomal subunit. Contacts protein L32.

This is Large ribosomal subunit protein bL17 from Bradyrhizobium sp. (strain ORS 278).